A 632-amino-acid polypeptide reads, in one-letter code: Actin-related protein 8 (632 aa).

A compositionally biased stretch (basic and acidic residues) spans Met-1–Gly-30. Residues Met-1–Pro-43 are disordered. Asp-288 to Asp-291 contacts ATP. 2 disordered regions span residues Met-410–Tyr-429 and Gln-434–Glu-494. A compositionally biased stretch (low complexity) spans Gln-434 to Ala-443.

This sequence belongs to the actin family. ARP8 subfamily. In terms of assembly, component of the chromatin remodeling INO80 complex; specifically part of a complex module associated with the DBINO domain of INO80. Exists as monomers and dimers, but the dimer is most probably the biologically relevant form required for stable interactions with histones that exploits the twofold symmetry of the nucleosome core.

It localises to the nucleus. The protein resides in the chromosome. Plays an important role in the functional organization of mitotic chromosomes. Exhibits low basal ATPase activity, and unable to polymerize. In terms of biological role, proposed core component of the chromatin remodeling INO80 complex which is involved in transcriptional regulation, DNA replication and probably DNA repair. Required for the recruitment of INO80 (and probably the INO80 complex) to sites of DNA damage Strongly prefer nucleosomes and H3-H4 tetramers over H2A-H2B dimers, suggesting it may act as a nucleosome recognition module within the complex. This is Actin-related protein 8 (actr8) from Salmo salar (Atlantic salmon).